A 372-amino-acid chain; its full sequence is 4-hydroxy-3-methylbut-2-en-1-yl diphosphate synthase (flavodoxin) (372 aa).

[4Fe-4S] cluster contacts are provided by Cys270, Cys273, Cys305, and Glu312.

This sequence belongs to the IspG family. The cofactor is [4Fe-4S] cluster.

It catalyses the reaction (2E)-4-hydroxy-3-methylbut-2-enyl diphosphate + oxidized [flavodoxin] + H2O + 2 H(+) = 2-C-methyl-D-erythritol 2,4-cyclic diphosphate + reduced [flavodoxin]. It functions in the pathway isoprenoid biosynthesis; isopentenyl diphosphate biosynthesis via DXP pathway; isopentenyl diphosphate from 1-deoxy-D-xylulose 5-phosphate: step 5/6. Converts 2C-methyl-D-erythritol 2,4-cyclodiphosphate (ME-2,4cPP) into 1-hydroxy-2-methyl-2-(E)-butenyl 4-diphosphate. This chain is 4-hydroxy-3-methylbut-2-en-1-yl diphosphate synthase (flavodoxin), found in Alcanivorax borkumensis (strain ATCC 700651 / DSM 11573 / NCIMB 13689 / SK2).